The sequence spans 353 residues: UPF0324 membrane protein PP_3661 (353 aa).

The next 8 membrane-spanning stretches (helical) occupy residues 20–42, 70–92, 105–127, 137–159, 166–188, 234–253, 266–288, and 326–348; these read LNGI…MPAI, ASWA…AFFG, WSGL…WCGM, ALLT…ESAL, SAMA…PLAI, MTRV…WISR, IAMP…QVLP, and ALAT…TLGV.

This sequence belongs to the UPF0324 family.

The protein localises to the cell membrane. This chain is UPF0324 membrane protein PP_3661, found in Pseudomonas putida (strain ATCC 47054 / DSM 6125 / CFBP 8728 / NCIMB 11950 / KT2440).